The primary structure comprises 447 residues: Probable alpha-galactosidase B (447 aa).

A signal peptide spans 1–25 (MTTFFSLTTAAAVLTLARGSNALVR). Cystine bridges form between C45–C77 and C127–C157. Residue D155 is the Nucleophile of the active site. 2 N-linked (GlcNAc...) asparagine glycosylation sites follow: N162 and N180. A substrate-binding site is contributed by 225 to 229 (EWGQA). An N-linked (GlcNAc...) asparagine glycan is attached at N236. The active-site Proton donor is D247. N-linked (GlcNAc...) asparagine glycosylation occurs at N286.

This sequence belongs to the glycosyl hydrolase 27 family.

The protein resides in the secreted. It catalyses the reaction Hydrolysis of terminal, non-reducing alpha-D-galactose residues in alpha-D-galactosides, including galactose oligosaccharides, galactomannans and galactolipids.. Functionally, hydrolyzes a variety of simple alpha-D-galactoside as well as more complex molecules such as oligosaccharides and polysaccharides. The sequence is that of Probable alpha-galactosidase B (aglB) from Aspergillus fumigatus (strain ATCC MYA-4609 / CBS 101355 / FGSC A1100 / Af293) (Neosartorya fumigata).